Reading from the N-terminus, the 28-residue chain is Dermaseptin-SP1 (28 aa).

As to expression, expressed by the skin glands.

Its subcellular location is the secreted. In terms of biological role, probable antimicrobial peptide which stimulates insulin-release in glucose-responsive BRIN-BD 11 cells. This Agalychnis spurrelli (Gliding leaf frog) protein is Dermaseptin-SP1.